Here is a 390-residue protein sequence, read N- to C-terminus: Phosphoglycerate kinase (390 aa).

Substrate-binding positions include 21–23, R36, 59–62, R113, and R146; these read DMN and HLGR. Residues K197, E319, and 345–348 contribute to the ATP site; that span reads GGDT.

The protein belongs to the phosphoglycerate kinase family. As to quaternary structure, monomer.

It is found in the cytoplasm. The catalysed reaction is (2R)-3-phosphoglycerate + ATP = (2R)-3-phospho-glyceroyl phosphate + ADP. Its pathway is carbohydrate degradation; glycolysis; pyruvate from D-glyceraldehyde 3-phosphate: step 2/5. The protein is Phosphoglycerate kinase of Laribacter hongkongensis (strain HLHK9).